The primary structure comprises 641 residues: 1-phosphatidylinositol 4,5-bisphosphate phosphodiesterase zeta-1 (641 aa).

One can recognise an EF-hand domain in the interval 35 to 70; sequence CSYIHVKRIFKDNDRLKQGRITIEEFRAIYRILTHR. The PI-PLC X-box domain occupies 155–299; sequence QDMTHPLNDY…LKFKVLVKNK (145 aa). Residues His-170 and His-215 contribute to the active site. The PI-PLC Y-box domain occupies 382–498; the sequence is LSDLVIYTKA…GYILKPHFLR (117 aa). The C2 domain occupies 498 to 622; it reads RESESYFNPS…KGYRRVPLFS (125 aa).

Interacts via its C2 domain with PtdIns(3)P and, to a lesser extent, PtdIns(5)P in vitro. The cofactor is Ca(2+).

Its subcellular location is the nucleus. It is found in the cytoplasm. The protein localises to the perinuclear region. It catalyses the reaction a 1,2-diacyl-sn-glycero-3-phospho-(1D-myo-inositol-4,5-bisphosphate) + H2O = 1D-myo-inositol 1,4,5-trisphosphate + a 1,2-diacyl-sn-glycerol + H(+). Its function is as follows. The production of the second messenger molecules diacylglycerol (DAG) and inositol 1,4,5-trisphosphate (IP3) is mediated by activated phosphatidylinositol-specific phospholipase C enzymes. In vitro, hydrolyzes PtdIns(4,5)P2 in a Ca(2+)-dependent manner. Triggers intracellular Ca(2+) oscillations in oocytes solely during M phase and is involved in inducing oocyte activation and initiating embryonic development up to the blastocyst stage. Is therefore a strong candidate for the egg-activating soluble sperm factor that is transferred from the sperm into the egg cytoplasm following gamete membrane fusion. May exert an inhibitory effect on phospholipase-C-coupled processes that depend on calcium ions and protein kinase C, including CFTR trafficking and function. The polypeptide is 1-phosphatidylinositol 4,5-bisphosphate phosphodiesterase zeta-1 (Macaca fascicularis (Crab-eating macaque)).